Reading from the N-terminus, the 361-residue chain is Trans-enoyl reductase gkaC (361 aa).

One can recognise an Enoyl reductase (ER) domain in the interval 15 to 357 (EDVGSFEISR…RREISGKKMV (343 aa)). NADP(+) contacts are provided by residues 48–51 (CDWK), 172–175 (SSAS), 195–198 (SPKN), Tyr-213, 260–261 (FE), and 351–352 (IS).

This sequence belongs to the zinc-containing alcohol dehydrogenase family. As to quaternary structure, monomer.

It participates in mycotoxin biosynthesis. Trans-enoyl reductasee; part of the gene cluster that mediates the biosynthesis of GKK1032, fungal natural products containing a macrocyclic para-cyclophane connected to a decahydrofluorene ring system that show potent antitumor activities. Within the pathway, the PKS-NRPS gkaA, with the help of the trans-enoyl reductase gkaC, synthesize the polyketide-tyrosyl acyl thioester product which can be reductively off-loaded by the terminal reductase (R) domain in gkaA. The PKS module of gkaA acts in combination with the trans-acting enoyl reductase gkaC to produce a methylated polyketide attached to the ACP domain. In parallel, the adenylation (A) domain of the NRPS module activated L-tyrosine, which is then transferred to the ACP domain. The condensation (C) domain subsequently links this group to the polyketide chain, forming an enzyme-bound amide. The alpha/beta hydrolase gkaG is then required to catalyze the subsequent Knoevenagel condensation that affords the 3-pyrrolin-2-one ring, whereas the three proteins gkaB, gkadX and gkaZ then function synergistically to form the cyclophane. In Penicillium citrinum, this protein is Trans-enoyl reductase gkaC.